The chain runs to 132 residues: Small ribosomal subunit protein uS8 (132 aa).

Belongs to the universal ribosomal protein uS8 family. In terms of assembly, part of the 30S ribosomal subunit. Contacts proteins S5 and S12.

In terms of biological role, one of the primary rRNA binding proteins, it binds directly to 16S rRNA central domain where it helps coordinate assembly of the platform of the 30S subunit. This Coprothermobacter proteolyticus (strain ATCC 35245 / DSM 5265 / OCM 4 / BT) protein is Small ribosomal subunit protein uS8.